The primary structure comprises 1034 residues: Presequence protease, mitochondrial (1034 aa).

The N-terminal 29 residues, 1–29 (MLKGGMLSRWKMWSPQYKILRNHLINFKS), are a transit peptide targeting the mitochondrion. Residue His128 coordinates Zn(2+). Residue Glu131 is the Proton acceptor of the active site. Positions 132 and 229 each coordinate Zn(2+).

It belongs to the peptidase M16 family. PreP subfamily. In terms of assembly, homodimer. Requires Zn(2+) as cofactor.

The protein resides in the mitochondrion. In terms of biological role, ATP-independent protease that degrades mitochondrial transit peptides after their cleavage. Also degrades other unstructured peptides. This is Presequence protease, mitochondrial from Drosophila melanogaster (Fruit fly).